The primary structure comprises 364 residues: DNA replication and repair protein RecF (364 aa).

30–37 (GNNGQGKT) is an ATP binding site.

It belongs to the RecF family.

It localises to the cytoplasm. In terms of biological role, the RecF protein is involved in DNA metabolism; it is required for DNA replication and normal SOS inducibility. RecF binds preferentially to single-stranded, linear DNA. It also seems to bind ATP. In Geobacter sp. (strain M21), this protein is DNA replication and repair protein RecF.